A 283-amino-acid polypeptide reads, in one-letter code: Pantothenate synthetase (283 aa).

Position 30–37 (30–37 (MGNLHAGH)) interacts with ATP. Residue H37 is the Proton donor of the active site. (R)-pantoate is bound at residue Q61. Q61 contributes to the beta-alanine binding site. 149–152 (GEKD) contacts ATP. Position 155 (Q155) interacts with (R)-pantoate. Residues L178 and 186 to 189 (MSSR) contribute to the ATP site.

Belongs to the pantothenate synthetase family. Homodimer.

The protein localises to the cytoplasm. It carries out the reaction (R)-pantoate + beta-alanine + ATP = (R)-pantothenate + AMP + diphosphate + H(+). Its pathway is cofactor biosynthesis; (R)-pantothenate biosynthesis; (R)-pantothenate from (R)-pantoate and beta-alanine: step 1/1. In terms of biological role, catalyzes the condensation of pantoate with beta-alanine in an ATP-dependent reaction via a pantoyl-adenylate intermediate. In Hahella chejuensis (strain KCTC 2396), this protein is Pantothenate synthetase.